A 687-amino-acid chain; its full sequence is Carboxysome assembly protein CcmM (687 aa).

The interval 242-327 (SINSDITNQI…RVVEVIIQRP (86 aa)) is rbcS-like repeat 1, SSUL1. Disordered stretches follow at residues 328-355 (GDVP…SAVA) and 442-476 (VHRP…SSAG). Positions 335–346 (SRGTTTTKALSS) are enriched in polar residues. The tract at residues 366–445 (ANQLRALLHQ…RVAEIVVHRP (80 aa)) is rbcS-like repeat 2, SSUL2. Over residues 451–472 (GKPSSSSSSVGYKSAPVSSAGG) the composition is skewed to low complexity. Residues 480–562 (PEVIATVRGL…RVLEQIIQRP (83 aa)) form a rbcS-like repeat 3, SSUL3 region. The segment at 565–590 (NVVAGRSPSSSSASTSSSASSNGFGS) is disordered. A compositionally biased stretch (low complexity) spans 568–587 (AGRSPSSSSASTSSSASSNG). The segment at 599 to 687 (SAVRLDNSVV…RVLETIIQRP (89 aa)) is rbcS-like repeat 4, SSUL4.

The protein belongs to the gamma-class carbonic anhydrase family. As to quaternary structure, probably forms homotrimers. Full length CcmM interacts with CcaA, CcmK1, CcmK2, CcmK4, CcmL, CcmN and itself, while the N-terminus of CcmM (first 249 residues) only interacts with CcaA, CcmM and CcmN. A probable CcmM-CcaA-CcmN complex as well as a CcaA-RuBisCO-CcmM complex can also be isolated. Interacts with full-length CcaA and the first 220 residues of CcaA; surface residues Gln-177 to Gln-188 are responsible in part for binding. Post-translationally, multiple forms of the protein of 73 (full length), 62, 52 (the most predominant form) and 36 kDa are seen even in the presence of protease inhibitors. CcmM52 interacts with CcaA.

The protein localises to the carboxysome. Its function is as follows. Functions as a scaffold protein for the assembly of beta-carboxysomes, initiates carboxysome assembly via its N-terminal domain binding to CcaA, CcmK and CcmL. Binds HCO(3)-, suggesting it may play a role in the activity or regulation of bicarbonate dehydration. Also initiates carboxysome assembly by coalescing RuBisCO (ribulose bisphosphate carboxylase, rbcL-rbcS) via its SSU-like domains. Produced as a full-length and a shorter form; both forms are required for correct carboxysome assembly and growth. Despite its strong similarity to gamma-class carbonic anhydrase (CA) it does not have detectable CA activity. Functionally, beta-carboxysome assembly initiates when soluble RuBisCO is condensed into a liquid matrix in a pre-carboxysome by the RbcS-like domains of probably both forms of CcmM. CcmN interacts with the N-terminus of full length CcmM, and then recruits the shell proteins (CcmK) via CcmN's encapsulation peptide. CcmM73 also interacts with CcmK proteins and CcmL directly. Shell formation requires CcmK proteins and CcmO. CcmL caps the otherwise elongated carboxysome. Once fully encapsulated carboxysomes are formed, they migrate within the cell probably via interactions with the cytoskeleton. In Synechocystis sp. (strain ATCC 27184 / PCC 6803 / Kazusa), this protein is Carboxysome assembly protein CcmM.